A 242-amino-acid polypeptide reads, in one-letter code: Megakaryocyte and platelet inhibitory receptor G6b (242 aa).

The signal sequence occupies residues 1–17; that stretch reads MALVLPLLPLLLSKVQG. N-linked (GlcNAc...) asparagine glycosylation is found at Asn32 and Asn112. Residues 141 to 161 traverse the membrane as a helical segment; sequence VLIPLLGVGLVLGLGVAGVVW. 2 short sequence motifs (ITIM motif) span residues 210–215 and 236–241; these read LHYADL and TVYAVV. The residue at position 212 (Tyr212) is a Phosphotyrosine.

In terms of assembly, interacts (via ITIM motif) with PTPN6 and PTPN11. Binds to heparin. In terms of processing, N-glycosylated. Post-translationally, may be O-glycosylated. Phosphorylated. Expressed in mature megakaryocytes and platelets. Not expressed by immature megakaryocytes.

The protein resides in the cell membrane. Inhibitory receptor that acts as a critical regulator of hematopoietic lineage differentiation, megakaryocyte function and platelet production. Inhibits platelet aggregation and activation by agonists such as ADP and collagen-related peptide. This regulation of megakaryocate function as well as platelet production ann activation is done through the inhibition (via the 2 ITIM motifs) of the receptors CLEC1B and GP6:FcRgamma signaling. Appears to operate in a calcium-independent manner. This is Megakaryocyte and platelet inhibitory receptor G6b from Mus musculus (Mouse).